The following is a 425-amino-acid chain: MNEHSDDVYVRARLRNQFGYMTWVPEYVEDRISSKKGILQRYEDYQQKQAKAQEVKTDSLVKYEGAKDVPRNLLRIYRGEADTSALARYEEVVSQKPQWHAPWKLTRVINGHTGWVRCVCVDPVDNAWFATGSNDSTIRVWDLATGKLKVTLQGHIMTVRDICISARHPYMFSASQDKLVKCWDLERNTVVRDFHGTLSGVHSVDLHPSLDLIVSAGRDSVVRVWDIRSRSCVLTLAGHRGPINKVRCLPVDPQIVSCSTDATVKLWDLVAGKPMKTLTHHKRNVRDLAFNPTEFSFASACTDDIRSWKLVDGQLLTNFNSEALGIVNTLACNQDGVLFAGGDTGELSFFDYKTGHKFQKLETTAMPGSLESEKGVLASTFDRTGLRLLTCERDKSIKIWKHIDGATQDSHPGLPWNPSLVRQRF.

WD repeat units follow at residues 111–151, 154–193, 196–235, 238–279, 281–320, 322–360, and 371–410; these read GHTG…LKVT, GHIMTVRDICISARHPYMFSASQDKLVKCWDLERNTVVRD, GTLSGVHSVDLHPSLDLIVSAGRDSVVRVWDIRSRSCVLT, GHRG…KTLT, HKRNVRDLAFNPTEFSFASACTDDIRSWKLVDGQLLTNFN, EALGIVNTLACNQDGVLFAGGDTGELSFFDYKTGHKFQK, and ESEKGVLASTFDRTGLRLLTCERDKSIKIWKHIDGATQDS.

Belongs to the WD repeat PRL1/PRL2 family. Associated with the spliceosome.

Its subcellular location is the cytoplasm. The protein localises to the nucleus. Functionally, involved in pre-mRNA splicing and required for cell cycle progression at G2/M. In Eremothecium gossypii (strain ATCC 10895 / CBS 109.51 / FGSC 9923 / NRRL Y-1056) (Yeast), this protein is Pre-mRNA-splicing factor PRP46 (PRP46).